The sequence spans 236 residues: uncharacterized protein (236 aa).

In terms of domain architecture, Response regulatory spans 3 to 116 (TCLIVDDELF…RLSKTLKRVR (114 aa)). Asp-54 carries the post-translational modification 4-aspartylphosphate. One can recognise an HTH LytTR-type domain in the interval 135–235 (LPCYSGSKLK…LKSLKQLFGF (101 aa)).

This is an uncharacterized protein from Shewanella oneidensis (strain ATCC 700550 / JCM 31522 / CIP 106686 / LMG 19005 / NCIMB 14063 / MR-1).